A 128-amino-acid polypeptide reads, in one-letter code: Arginine decarboxylase proenzyme (128 aa).

Ser-76 functions as the Schiff-base intermediate with substrate; via pyruvic acid in the catalytic mechanism. The residue at position 76 (Ser-76) is a Pyruvic acid (Ser); by autocatalysis. His-81 (proton acceptor; for processing activity) is an active-site residue. Cys-96 (proton donor; for catalytic activity) is an active-site residue.

Belongs to the prokaryotic AdoMetDC family. Type 1 subfamily. As to quaternary structure, heterooctamer of four alpha and four beta chains arranged as a tetramer of alpha/beta heterodimers. It depends on pyruvate as a cofactor. Post-translationally, is synthesized initially as an inactive proenzyme. Formation of the active enzyme involves a self-maturation process in which the active site pyruvoyl group is generated from an internal serine residue via an autocatalytic post-translational modification. Two non-identical subunits are generated from the proenzyme in this reaction, and the pyruvate is formed at the N-terminus of the alpha chain, which is derived from the carboxyl end of the proenzyme. The post-translation cleavage follows an unusual pathway, termed non-hydrolytic serinolysis, in which the side chain hydroxyl group of the serine supplies its oxygen atom to form the C-terminus of the beta chain, while the remainder of the serine residue undergoes an oxidative deamination to produce ammonia and the pyruvoyl group blocking the N-terminus of the alpha chain.

It carries out the reaction L-arginine + H(+) = agmatine + CO2. The protein operates within amine and polyamine biosynthesis; agmatine biosynthesis; agmatine from L-arginine: step 1/1. In terms of biological role, specifically catalyzes the decarboxylation of L-arginine to agmatine. Has no S-adenosylmethionine decarboxylase (AdoMetDC) activity. The chain is Arginine decarboxylase proenzyme from Sulfurisphaera tokodaii (strain DSM 16993 / JCM 10545 / NBRC 100140 / 7) (Sulfolobus tokodaii).